Reading from the N-terminus, the 537-residue chain is MISESVVDLSRLQFAMTALYHFLFVPLTLGMTFLLAIMESVYVMTGKQVYKDMVKFWGKLFGINFALGVTTGITMEFQFGTNWAYYSHYVGDIFGAPLAIEGLTAFFLESTFIGMFFFGWDRLSKIQHLAVTWLVALGSNLSALWILVANGWMQHPVGAEFNFETMRMELVDFGALLLNPVAQVKFVHTVASGYVTGAVFVLAISSYYLLKKRDLGFARRSFAIASAFGMASILSVIVLGDESGYEVGEVQKAKLAAIEAEWETHPAPASFTLIGFPNEEEQRTDFAVKIPWVLGIIATRSLDEQVIGIKDLIADHEARIRNGMVRYGLLEELRAGNKSPEKIAAFNEVKDDLGYGLLLKKYTPNVVDASEEQIKQAAKDTIPSVASMFWSFRAMVGAGFAMLILFVCAFWASARKNEESKPWLLKFALYSLPLPWIATQTGWFVAEHGRQPWTIGGVLPTHLSASSLSTGDLWGSLIALIAFYTLLLVVEMYLMIRFARLGPSSLHTGRYHFEQLEQHAVKHASPSQADPQQPVNA.

The Cytoplasmic segment spans residues 1 to 24 (MISESVVDLSRLQFAMTALYHFLF). His21 provides a ligand contact to heme b. A helical membrane pass occupies residues 25 to 44 (VPLTLGMTFLLAIMESVYVM). The Periplasmic segment spans residues 45–96 (TGKQVYKDMVKFWGKLFGINFALGVTTGITMEFQFGTNWAYYSHYVGDIFGA). The chain crosses the membrane as a helical span at residues 97 to 116 (PLAIEGLTAFFLESTFIGMF). Residues 117–131 (FFGWDRLSKIQHLAV) are Cytoplasmic-facing. The helical transmembrane segment at 132–151 (TWLVALGSNLSALWILVANG) threads the bilayer. The Periplasmic portion of the chain corresponds to 152–189 (WMQHPVGAEFNFETMRMELVDFGALLLNPVAQVKFVHT). His188 lines the heme b pocket. A helical membrane pass occupies residues 190-209 (VASGYVTGAVFVLAISSYYL). Residues 210 to 221 (LKKRDLGFARRS) lie on the Cytoplasmic side of the membrane. A helical transmembrane segment spans residues 222–241 (FAIASAFGMASILSVIVLGD). At 242-394 (ESGYEVGEVQ…VASMFWSFRA (153 aa)) the chain is on the periplasmic side. Met395 contributes to the heme b binding site. The chain crosses the membrane as a helical span at residues 395 to 414 (MVGAGFAMLILFVCAFWASA). Residues 415–472 (RKNEESKPWLLKFALYSLPLPWIATQTGWFVAEHGRQPWTIGGVLPTHLSASSLSTGD) are Cytoplasmic-facing. Residues 473–492 (LWGSLIALIAFYTLLLVVEM) traverse the membrane as a helical segment. Over 493-537 (YLMIRFARLGPSSLHTGRYHFEQLEQHAVKHASPSQADPQQPVNA) the chain is Periplasmic.

It belongs to the cytochrome ubiquinol oxidase subunit 1 family. In terms of assembly, heterodimer of subunits I and II. Requires heme b as cofactor. The cofactor is heme d cis-diol.

The protein resides in the cell inner membrane. The catalysed reaction is 2 a ubiquinol + O2(in) + 4 H(+)(in) = 2 a ubiquinone + 2 H2O(in) + 4 H(+)(out). Functionally, may be involved in maintaining the low intracellular oxygen concentration required for nitrogen fixation. This chain is Cytochrome bd ubiquinol oxidase subunit 1 (cydA), found in Azotobacter vinelandii.